Consider the following 198-residue polypeptide: Glycerol-3-phosphate acyltransferase (198 aa).

The next 5 membrane-spanning stretches (helical) occupy residues 2-22, 48-70, 75-97, 111-131, and 154-174; these read YAVL…AYIL, LGYK…AVLI, MGNT…PVFL, VVMT…VTVI, and IFWN…LAIF.

This sequence belongs to the PlsY family. Probably interacts with PlsX.

It is found in the cell membrane. It catalyses the reaction an acyl phosphate + sn-glycerol 3-phosphate = a 1-acyl-sn-glycero-3-phosphate + phosphate. Its pathway is lipid metabolism; phospholipid metabolism. Catalyzes the transfer of an acyl group from acyl-phosphate (acyl-PO(4)) to glycerol-3-phosphate (G3P) to form lysophosphatidic acid (LPA). This enzyme utilizes acyl-phosphate as fatty acyl donor, but not acyl-CoA or acyl-ACP. The protein is Glycerol-3-phosphate acyltransferase of Thermoanaerobacter pseudethanolicus (strain ATCC 33223 / 39E) (Clostridium thermohydrosulfuricum).